Here is a 209-residue protein sequence, read N- to C-terminus: MIGLVGKKVGMTRIFTEDGVSIPVTVIEIEANRVTQVKGLENDGYTAIQVTTGAKKASRVTKPAAGHFAKAGVEAGRGLWEFRTAEGAEFTVGQSINVDIFADVKKVDVTGTSKGKGFAGTVKRWNFRTQDATHGNSLSHRVPGSIGQNQTPGKVFKGKKMAGQLGNERVTVQSLDVVRVDAERNLLLVKGAVPGATGSDLIVKPAVKA.

Residues 132–153 (ATHGNSLSHRVPGSIGQNQTPG) are disordered. Position 150 is an N5-methylglutamine (Gln-150).

This sequence belongs to the universal ribosomal protein uL3 family. As to quaternary structure, part of the 50S ribosomal subunit. Forms a cluster with proteins L14 and L19. Post-translationally, methylated by PrmB.

In terms of biological role, one of the primary rRNA binding proteins, it binds directly near the 3'-end of the 23S rRNA, where it nucleates assembly of the 50S subunit. The polypeptide is Large ribosomal subunit protein uL3 (Erwinia tasmaniensis (strain DSM 17950 / CFBP 7177 / CIP 109463 / NCPPB 4357 / Et1/99)).